Consider the following 206-residue polypeptide: MLGLIGKKVGMTQIFQKNGIVVPVTVIEFQPNYIIGKKTVDRDGYSALIAGSVDLKSSKVSKPIKGQYKSLKDIEPKRYVIELKGLDGYDAGDEIKVDVFKSVKYVDVTGTTKGKGFQGAMKRHNFSGGPSSHGSKFHRHLGGTGQATTPARTFKGTKMAGRMGGNQQTIQNLEVVLIDEEKRALLVKGAVPGAKGSFVVVKKSKK.

Positions 127 to 151 are disordered; sequence SGGPSSHGSKFHRHLGGTGQATTPA.

The protein belongs to the universal ribosomal protein uL3 family. In terms of assembly, part of the 50S ribosomal subunit. Forms a cluster with proteins L14 and L19.

In terms of biological role, one of the primary rRNA binding proteins, it binds directly near the 3'-end of the 23S rRNA, where it nucleates assembly of the 50S subunit. This Borreliella burgdorferi (strain ZS7) (Borrelia burgdorferi) protein is Large ribosomal subunit protein uL3.